Consider the following 296-residue polypeptide: Transcription repressor OFP3 (296 aa).

Disordered regions lie at residues 27-115 (MSRS…SANA) and 131-196 (PSDQ…AHSS). A compositionally biased stretch (polar residues) spans 60–69 (LSSTAHHPQA). The segment covering 78–88 (SFKRKIKRKTV) has biased composition (basic residues). Low complexity predominate over residues 92–115 (SSRLKLSTSSSLNHRSKSSSSANA). Positions 136-159 (FVHDPEPHSSIDIKDELSVRKLDD) are enriched in basic and acidic residues. The OVATE domain maps to 228 to 287 (IVLSSVDPEKDFRESMVEMIMENKMREQKDLEDLLACYLSLNSSEYHDVIIKAFENTWLH).

In terms of assembly, interacts with BLH1, BLH3, KNAT5 and KNAT7.

The protein localises to the nucleus. In terms of biological role, transcriptional repressor that may regulate multiple aspects of plant growth and development through the regulation of BEL1-LIKE (BLH) and KNOX TALE (KNAT) homeodomain transcription factors. The protein is Transcription repressor OFP3 (OFP3) of Arabidopsis thaliana (Mouse-ear cress).